The chain runs to 205 residues: Small ribosomal subunit protein bS16 (205 aa).

Residues G110 to E205 are disordered. Basic and acidic residues predominate over residues D123–A132. A compositionally biased stretch (acidic residues) spans E153 to E205.

The protein belongs to the bacterial ribosomal protein bS16 family.

The sequence is that of Small ribosomal subunit protein bS16 from Salinibacter ruber (strain DSM 13855 / M31).